The primary structure comprises 257 residues: Transcription factor MYB4 (257 aa).

2 HTH myb-type domains span residues 9–61 (KMGL…INYL) and 62–116 (RPDI…KKRL). 2 DNA-binding regions (H-T-H motif) span residues 37-61 (WRAL…INYL) and 89-112 (WSAI…HTHL). The segment at 115-179 (RLDAPAQGGH…VAEEHGNAGI (65 aa)) is disordered. The span at 130–140 (GKKHKKPKSAK) shows a compositional bias: basic residues. The span at 141–170 (KPAAAAAAPPASPERSASSSVTESSMASSV) shows a compositional bias: low complexity.

The protein localises to the nucleus. Transcriptional activator involved in cold stress response. Regulates positively the expression of genes involved in reactive oxygen species (ROS) scavenging such as peroxidase and superoxide dismutase during cold stress. Transactivates a complex gene network that have major effects on stress tolerance and panicle development. The polypeptide is Transcription factor MYB4 (Oryza sativa subsp. japonica (Rice)).